The primary structure comprises 172 residues: Protein GrpE (172 aa).

The protein belongs to the GrpE family. In terms of assembly, homodimer.

Its subcellular location is the cytoplasm. Functionally, participates actively in the response to hyperosmotic and heat shock by preventing the aggregation of stress-denatured proteins, in association with DnaK and GrpE. It is the nucleotide exchange factor for DnaK and may function as a thermosensor. Unfolded proteins bind initially to DnaJ; upon interaction with the DnaJ-bound protein, DnaK hydrolyzes its bound ATP, resulting in the formation of a stable complex. GrpE releases ADP from DnaK; ATP binding to DnaK triggers the release of the substrate protein, thus completing the reaction cycle. Several rounds of ATP-dependent interactions between DnaJ, DnaK and GrpE are required for fully efficient folding. The polypeptide is Protein GrpE (Thermotoga maritima (strain ATCC 43589 / DSM 3109 / JCM 10099 / NBRC 100826 / MSB8)).